The chain runs to 237 residues: Phosphoribosylaminoimidazole-succinocarboxamide synthase (237 aa).

It belongs to the SAICAR synthetase family.

The catalysed reaction is 5-amino-1-(5-phospho-D-ribosyl)imidazole-4-carboxylate + L-aspartate + ATP = (2S)-2-[5-amino-1-(5-phospho-beta-D-ribosyl)imidazole-4-carboxamido]succinate + ADP + phosphate + 2 H(+). Its pathway is purine metabolism; IMP biosynthesis via de novo pathway; 5-amino-1-(5-phospho-D-ribosyl)imidazole-4-carboxamide from 5-amino-1-(5-phospho-D-ribosyl)imidazole-4-carboxylate: step 1/2. The sequence is that of Phosphoribosylaminoimidazole-succinocarboxamide synthase from Idiomarina loihiensis (strain ATCC BAA-735 / DSM 15497 / L2-TR).